Reading from the N-terminus, the 357-residue chain is uncharacterized protein (357 aa).

This is an uncharacterized protein from Caenorhabditis elegans.